We begin with the raw amino-acid sequence, 368 residues long: N-acetylneuraminate epimerase (368 aa).

A signal peptide spans 1-19 (MNKTITALAIMMASFAANA). Kelch repeat units lie at residues 40 to 84 (TVYI…AFID), 86 to 137 (NLYV…FVHN), 139 to 173 (KAYV…KINA), 174 to 219 (YYFD…VNKG), 222 to 265 (TWLI…VAGG), 287 to 336 (ENYQ…PWNN), and 338 to 367 (LLII…VTVQ). The Proton acceptor role is filled by glutamate 228.

Belongs to the NanM family. Homodimer.

Its subcellular location is the periplasm. It catalyses the reaction N-acetyl-alpha-neuraminate = N-acetyl-beta-neuraminate. Converts alpha-N-acetylneuranimic acid (Neu5Ac) to the beta-anomer, accelerating the equilibrium between the alpha- and beta-anomers. Probably facilitates sialidase-negative bacteria to compete successfully for limited amounts of extracellular Neu5Ac, which is likely taken up in the beta-anomer. In addition, the rapid removal of sialic acid from solution might be advantageous to the bacterium to damp down host responses. The polypeptide is N-acetylneuraminate epimerase (Shigella boydii serotype 4 (strain Sb227)).